An 867-amino-acid polypeptide reads, in one-letter code: GATOR2 complex protein Mio (867 aa).

WD repeat units follow at residues 51 to 86 (ANES…GICN), 100 to 144 (RQQR…PKET), 149 to 188 (GVGE…ATCQ), 190 to 228 (IQTK…SPLR), and 231 to 272 (QSSK…TDNS). A compositionally biased stretch (low complexity) spans 350–376 (PASPTSTAATPTQQQPTSSCSTNSGSS). Positions 350 to 378 (PASPTSTAATPTQQQPTSSCSTNSGSSLD) are disordered. The C4-type zinc finger occupies 739-777 (LSCNFCGKSVSNALLDEPRPRSTTTSTNRLSSCPSCRKP). Zn(2+) contacts are provided by Cys-741, Cys-744, Cys-771, Cys-774, Cys-784, Cys-821, Cys-824, His-826, His-829, His-832, Cys-843, Cys-848, and Cys-852. The RING-type; atypical zinc-finger motif lies at 778 to 857 (LPRCSLCLMH…CNCRCFDMDG (80 aa)).

This sequence belongs to the WD repeat mio family. Component of the GATOR complex consisting of mio, Nup44A/Seh1, Im11, Nplr3, Nplr2, Wdr24, Wdr59 and Sec13. Within the GATOR complex, probable component of the GATOR2 subcomplex which is likely composed of mio, Nup44A/Seh1, Wdr24, Wdr59 and Sec13. Interacts with Wdr24. Interacts with nucleoporin Nup44A/Seh1. The GATOR2 complex associates with unmet in the absence of S-adenosyl-L-methionine; the mio-Wdr24-Nup44A subcomplex is essential and sufficient for this interaction while Wdr59 and Sec13 are dispensable. This association acts as a nutrient sensor to inhibit mTORC1 signaling in the absence of methionine. In terms of tissue distribution, present in the oocyte.

The protein resides in the nucleus. Its subcellular location is the lysosome. An essential component of the GATOR subcomplex GATOR2 which functions as an activator of the amino acid-sensing branch of the mTORC1 signaling pathway. The two GATOR subcomplexes, GATOR1 and GATOR2, regulate the mTORC1 pathway in order to mediate metabolic homeostasis, female gametogenesis and the response to amino acid limitation and complete starvation. GATOR2 activates the mTORC1 signaling pathway through the inhibition of the GATOR1 subcomplex, controlling the switch to cell proliferation and growth under nutrient replete conditions and during female oocyte development. This component is required for activating mTORC1 specifically in germline cells to promote cell growth and maintain the oocyte fate. GATOR1 and GATOR2 act at different stages of oogenesis to regulate mTORC1 in order to control meiotic entry and promote oocyte growth and development. After exactly four mitotic cyst divisions, the GATOR1 complex members (Iml1, Nprl2 and Nprl3) down-regulate mTORC1 to slow cellular metabolism and promote the mitotic/meiotic transition. At later stages of oogenesis, the mio and Nup44A components of the GATOR2 complex inhibit GATOR1 and thus activate mTORC1 to promote meiotic progression, and drive oocyte growth and development. In addition to its role in the regulation of the mTORC1 complex, functions independently of mTORC1 to prevent the inappropriate accumulation of autolysosomes in germline tissues. In Drosophila melanogaster (Fruit fly), this protein is GATOR2 complex protein Mio.